The primary structure comprises 256 residues: Homeobox protein TGIF2LX (256 aa).

A disordered region spans residues 1-45; sequence MEAAADSPAETRSRVEKDSRRVEKDSRRPKKDSPAKTQSPAQDTS. A compositionally biased stretch (basic and acidic residues) spans 9–34; that stretch reads AETRSRVEKDSRRVEKDSRRPKKDSP. Over residues 35–45 the composition is skewed to polar residues; that stretch reads AKTQSPAQDTS. Residues 62 to 125 constitute a DNA-binding region (homeobox; TALE-type); the sequence is EHKKKRKGYL…INARRRILPD (64 aa). Residues 136 to 224 form a disordered region; sequence VGHKTGKDAN…SSSPEPVSTE (89 aa). Positions 166–179 are enriched in polar residues; the sequence is DNVQSLPLRSSPKG. Low complexity predominate over residues 209–224; that stretch reads VSNITSSSSPEPVSTE.

The protein belongs to the TALE/TGIF homeobox family.

The protein localises to the nucleus. In terms of biological role, may have a transcription role in testis. In Papio hamadryas (Hamadryas baboon), this protein is Homeobox protein TGIF2LX (TGIF2LX).